Here is a 341-residue protein sequence, read N- to C-terminus: Queuosine 5'-phosphate N-glycosylase/hydrolase (341 aa).

Methionine 1 is subject to N-acetylmethionine. Queuine-binding residues include histidine 53, phenylalanine 237, aspartate 239, aspartate 314, tyrosine 315, and aspartate 319. Catalysis depends on aspartate 239, which acts as the Nucleophile or transition state stabilizer.

It belongs to the QNG1 protein family.

The catalysed reaction is queuosine 5'-phosphate + H2O = queuine + D-ribose 5-phosphate. Its function is as follows. Catalyzes the hydrolysis of queuosine 5'-phosphate, releasing the nucleobase queuine (q). Is required for salvage of queuine from exogenous queuosine (Q) that is imported and then converted to queuosine 5'-phosphate intracellularly. This Bos taurus (Bovine) protein is Queuosine 5'-phosphate N-glycosylase/hydrolase.